The following is a 47-amino-acid chain: PhoP/PhoQ regulator MgrB (47 aa).

A helical membrane pass occupies residues 6–26; it reads WAILLAVLVACLLLWMQTLNV.

This sequence belongs to the MgrB family. As to quaternary structure, may form homooligomers. Probably interacts with the periplasmic domain of PhoQ.

The protein localises to the cell inner membrane. Functionally, phoP-regulated transcription is redox-sensitive, being activated when the periplasm becomes more reducing. MgrB acts between DsbA/DsbB and PhoP/PhoQ in this pathway. Represses PhoP/PhoQ signaling, possibly by binding to the periplasmic domain of PhoQ, altering its activity and that of downstream effector PhoP. This is PhoP/PhoQ regulator MgrB from Cronobacter sakazakii (strain ATCC BAA-894) (Enterobacter sakazakii).